The chain runs to 257 residues: Acyl-[acyl-carrier-protein]--UDP-N-acetylglucosamine O-acyltransferase (257 aa).

The protein belongs to the transferase hexapeptide repeat family. LpxA subfamily. Homotrimer.

The protein localises to the cytoplasm. It carries out the reaction a (3R)-hydroxyacyl-[ACP] + UDP-N-acetyl-alpha-D-glucosamine = a UDP-3-O-[(3R)-3-hydroxyacyl]-N-acetyl-alpha-D-glucosamine + holo-[ACP]. Its pathway is glycolipid biosynthesis; lipid IV(A) biosynthesis; lipid IV(A) from (3R)-3-hydroxytetradecanoyl-[acyl-carrier-protein] and UDP-N-acetyl-alpha-D-glucosamine: step 1/6. Involved in the biosynthesis of lipid A, a phosphorylated glycolipid that anchors the lipopolysaccharide to the outer membrane of the cell. The protein is Acyl-[acyl-carrier-protein]--UDP-N-acetylglucosamine O-acyltransferase of Anaeromyxobacter sp. (strain Fw109-5).